Reading from the N-terminus, the 99-residue chain is Sm-like protein LSM7 (99 aa).

In terms of domain architecture, Sm spans glutamate 6–threonine 86.

This sequence belongs to the snRNP Sm proteins family. Component of the heptameric LSM1-LSM7 complex that forms a seven-membered ring structure with a donut shape. The LSM subunits are arranged in the order LSM1, LSM2, LSM3, LSM6, LSM5, LSM7 and LSM4. Component of the heptameric LSM2-LSM8 complex that forms a seven-membered ring structure with a donut shape. The LSM subunits are arranged in the order LSM8, LSM2, LSM3, LSM6, LSM5, LSM7 and LSM4. LSM7 subunit interacts only with its two neighboring subunits, LSM5 and LSM4. In terms of tissue distribution, expressed in roots, leaves, stems, flowers and siliques.

The protein localises to the cytoplasm. It localises to the nucleus. In terms of biological role, component of LSM protein complexes, which are involved in RNA processing. Component of the cytoplasmic LSM1-LSM7 complex which is involved in mRNA degradation by promoting decapping and leading to accurate 5'-3' mRNA decay. The cytoplasmic LSM1-LSM7 complex regulates developmental gene expression by the decapping of specific development-related transcripts. Component of the nuclear LSM2-LSM8 complex which is involved splicing nuclear mRNAs. LSM2-LSM8 binds directly to the U6 small nuclear RNAs (snRNAs) and is essential for accurate splicing of selected development-related mRNAs through the stabilization of the spliceosomal U6 snRNA. Plays a critical role in the regulation of development-related gene expression. In Arabidopsis thaliana (Mouse-ear cress), this protein is Sm-like protein LSM7.